We begin with the raw amino-acid sequence, 114 residues long: Large ribosomal subunit protein bL21 (114 aa).

It belongs to the bacterial ribosomal protein bL21 family. Part of the 50S ribosomal subunit. Contacts protein L20.

Functionally, this protein binds to 23S rRNA in the presence of protein L20. The protein is Large ribosomal subunit protein bL21 of Protochlamydia amoebophila (strain UWE25).